The sequence spans 844 residues: Fe(2+) transport protein A/Fe(2+) transporter FeoB fusion protein (844 aa).

The tract at residues 1–73 is feoA; the sequence is MRLSELHTGD…EDAAKIEVEL (73 aa). Positions 74–844 are feoB; that stretch reads ISSNATSSPA…LIYRIGILFF (771 aa). Positions 79-106 are enriched in polar residues; sequence TSSPASNDIGEQSANPDSNESIPTNPTE. The tract at residues 79–110 is disordered; sequence TSSPASNDIGEQSANPDSNESIPTNPTEDISA. Positions 126–289 constitute a FeoB-type G domain; that stretch reads VIRVALIGNP…FDTLISIHEG (164 aa). Residues 133–140, 158–162, 179–182, 240–243, and 269–271 each bind GTP; these read GNPNCGKT, GVTVE, DLPG, NMFD, and VGR. A run of 8 helical transmembrane segments spans residues 418-438, 475-495, 520-540, 559-579, 581-601, 646-666, 786-806, and 817-837; these read VLGFPLFLLFMFIMFEATFVL, IGGVGGVIVFLPNILILYFFI, LHGKSFIPLIMGFGCNVPAIM, PLMSCSARLPVYLLLAGAFFP, SAGLVLFGLYFLGILLAVLLA, MGSIILLASIVIWFLSYYPRY, IIALALMAFVLIYFPCIATVV, and WAVFSIIYSCSLAWIVSFLIY.

It in the N-terminal section; belongs to the FeoA family. In the C-terminal section; belongs to the TRAFAC class TrmE-Era-EngA-EngB-Septin-like GTPase superfamily. FeoB GTPase (TC 9.A.8) family.

It localises to the cell inner membrane. Functionally, probable transporter of a GTP-driven Fe(2+) uptake system. The protein is Fe(2+) transport protein A/Fe(2+) transporter FeoB fusion protein of Porphyromonas gingivalis (strain ATCC BAA-308 / W83).